The following is a 661-amino-acid chain: 1-deoxy-D-xylulose-5-phosphate synthase (661 aa).

Thiamine diphosphate contacts are provided by residues His98 and Ala139–Ser141. Asp170 is a Mg(2+) binding site. Thiamine diphosphate is bound by residues Gly171 to Ala172, Asn199, Tyr309, and Glu391. Asn199 is a binding site for Mg(2+).

This sequence belongs to the transketolase family. DXPS subfamily. Homodimer. Mg(2+) is required as a cofactor. The cofactor is thiamine diphosphate.

It carries out the reaction D-glyceraldehyde 3-phosphate + pyruvate + H(+) = 1-deoxy-D-xylulose 5-phosphate + CO2. Its pathway is metabolic intermediate biosynthesis; 1-deoxy-D-xylulose 5-phosphate biosynthesis; 1-deoxy-D-xylulose 5-phosphate from D-glyceraldehyde 3-phosphate and pyruvate: step 1/1. Its function is as follows. Catalyzes the acyloin condensation reaction between C atoms 2 and 3 of pyruvate and glyceraldehyde 3-phosphate to yield 1-deoxy-D-xylulose-5-phosphate (DXP). This is 1-deoxy-D-xylulose-5-phosphate synthase from Bradyrhizobium diazoefficiens (strain JCM 10833 / BCRC 13528 / IAM 13628 / NBRC 14792 / USDA 110).